A 454-amino-acid chain; its full sequence is Tetrahydroanabasine acetyltransferase (454 aa).

Residues histidine 164 and aspartate 389 each act as proton acceptor in the active site.

This sequence belongs to the plant acyltransferase family. As to quaternary structure, monomer.

It catalyses the reaction tetrahydroanabasine + acetyl-CoA = ammodendrine + CoA. Its pathway is alkaloid biosynthesis. Tetrahydroanabasine acetyltransferase involved in the accumulation of quinolizidine type antinutritional alkaloids (QAs) natural products. QAs impart a bitter taste to plants, acting as repellents and toxicants for herbivores and predators, and possess a variety of pharmacological effects, including sedative, anticonvulsant, anti-inflammatory, antiviral, antitumor, antipyretic, anti-hepatitis B, antifibrotic, antiallergic, antidiarrheal, analgesic and antimicrobial activities. Mediates the conversion of tetrahydroanabasine into ammodendrine. The polypeptide is Tetrahydroanabasine acetyltransferase (Lupinus albus (White lupine)).